Reading from the N-terminus, the 309-residue chain is Elongation factor Ts (309 aa).

The segment at 82–85 (TDFV) is involved in Mg(2+) ion dislocation from EF-Tu.

It belongs to the EF-Ts family.

The protein localises to the cytoplasm. In terms of biological role, associates with the EF-Tu.GDP complex and induces the exchange of GDP to GTP. It remains bound to the aminoacyl-tRNA.EF-Tu.GTP complex up to the GTP hydrolysis stage on the ribosome. The polypeptide is Elongation factor Ts (Rickettsia felis (strain ATCC VR-1525 / URRWXCal2) (Rickettsia azadi)).